A 194-amino-acid polypeptide reads, in one-letter code: MPKVGMREIRRAQLIDATLRSIDEAGLPGTTLASVAQRANISTGIVSHYFGDKDGLLEATMRHVLRDLWSATTRRRVAARKDPRSRLRAVVAANFDDTQVSAPVMKTWLAFWSQSMHDPMLKRLQHVNTRRLHSNLCAEFAKALPLAKAREAASGLAALIDGLWLRGALAGGPIDTRAALKLAHDYIDLLLASD.

The 61-residue stretch at 8 to 68 (EIRRAQLIDA…ATMRHVLRDL (61 aa)) folds into the HTH tetR-type domain. The segment at residues 31-50 (TLASVAQRANISTGIVSHYF) is a DNA-binding region (H-T-H motif).

Its pathway is amine and polyamine biosynthesis; betaine biosynthesis via choline pathway [regulation]. Its function is as follows. Repressor involved in the biosynthesis of the osmoprotectant glycine betaine. It represses transcription of the choline transporter BetT and the genes of BetAB involved in the synthesis of glycine betaine. The polypeptide is HTH-type transcriptional regulator BetI (Burkholderia cenocepacia (strain HI2424)).